Consider the following 262-residue polypeptide: Polyamine aminopropyltransferase (262 aa).

Residues 1–249 (MWITQEITPY…DIHRAAFALP (249 aa)) enclose the PABS domain. Asparagine 29 lines the S-methyl-5'-thioadenosine pocket. Residue aspartate 83 participates in spermidine binding. Catalysis depends on aspartate 155, which acts as the Proton acceptor.

It belongs to the spermidine/spermine synthase family. Homodimer or homotetramer.

The protein localises to the cytoplasm. The enzyme catalyses S-adenosyl 3-(methylsulfanyl)propylamine + putrescine = S-methyl-5'-thioadenosine + spermidine + H(+). Its pathway is amine and polyamine biosynthesis; spermidine biosynthesis; spermidine from putrescine: step 1/1. Its function is as follows. Catalyzes the irreversible transfer of a propylamine group from the amino donor S-adenosylmethioninamine (decarboxy-AdoMet) to putrescine (1,4-diaminobutane) to yield spermidine. This chain is Polyamine aminopropyltransferase, found in Helicobacter pylori (strain P12).